The sequence spans 1059 residues: WD repeat-containing protein on Y chromosome (1059 aa).

WD repeat units follow at residues 121–161 (DFCP…ALTA), 170–209 (RSKT…FTLK), 214–256 (RLPQ…KVTT), 344–383 (CVPR…KPSV), 387–426 (GHTS…LLQT), 476–515 (SHTK…KMTI), 528–567 (LEPV…CMRT), 616–658 (QHSD…RRYD), 714–759 (MRQL…GFKG), 766–805 (MAGD…IPNE), and 849–888 (AHRA…IGLL).

The protein is WD repeat-containing protein on Y chromosome of Anopheles gambiae (African malaria mosquito).